Here is a 613-residue protein sequence, read N- to C-terminus: Dihydroxy-acid dehydratase (613 aa).

Asp81 provides a ligand contact to Mg(2+). [2Fe-2S] cluster is bound at residue Cys122. Asp123 and Lys124 together coordinate Mg(2+). At Lys124 the chain carries N6-carboxylysine. A [2Fe-2S] cluster-binding site is contributed by Cys195. Mg(2+) is bound at residue Glu491. Ser517 acts as the Proton acceptor in catalysis.

It belongs to the IlvD/Edd family. Homodimer. It depends on [2Fe-2S] cluster as a cofactor. Mg(2+) is required as a cofactor.

It catalyses the reaction (2R)-2,3-dihydroxy-3-methylbutanoate = 3-methyl-2-oxobutanoate + H2O. The catalysed reaction is (2R,3R)-2,3-dihydroxy-3-methylpentanoate = (S)-3-methyl-2-oxopentanoate + H2O. It participates in amino-acid biosynthesis; L-isoleucine biosynthesis; L-isoleucine from 2-oxobutanoate: step 3/4. The protein operates within amino-acid biosynthesis; L-valine biosynthesis; L-valine from pyruvate: step 3/4. Functions in the biosynthesis of branched-chain amino acids. Catalyzes the dehydration of (2R,3R)-2,3-dihydroxy-3-methylpentanoate (2,3-dihydroxy-3-methylvalerate) into 2-oxo-3-methylpentanoate (2-oxo-3-methylvalerate) and of (2R)-2,3-dihydroxy-3-methylbutanoate (2,3-dihydroxyisovalerate) into 2-oxo-3-methylbutanoate (2-oxoisovalerate), the penultimate precursor to L-isoleucine and L-valine, respectively. This Buchnera aphidicola subsp. Melaphis rhois protein is Dihydroxy-acid dehydratase.